Reading from the N-terminus, the 442-residue chain is Histidine--tRNA ligase (442 aa).

The tract at residues 416–442 (SGDETTVPVEEFPPEGGEELPTYEDYE) is disordered. The segment covering 427-442 (FPPEGGEELPTYEDYE) has biased composition (acidic residues).

The protein belongs to the class-II aminoacyl-tRNA synthetase family.

It is found in the cytoplasm. The catalysed reaction is tRNA(His) + L-histidine + ATP = L-histidyl-tRNA(His) + AMP + diphosphate + H(+). In Halorubrum lacusprofundi (strain ATCC 49239 / DSM 5036 / JCM 8891 / ACAM 34), this protein is Histidine--tRNA ligase.